Consider the following 122-residue polypeptide: Fluoride-specific ion channel FluC (122 aa).

The next 4 helical transmembrane spans lie at 6–26 (LVVG…INLV), 33–53 (SISF…GLLF), 60–80 (GLSP…FTTF), and 101–121 (LNII…FLIF). Na(+) is bound by residues Gly75 and Thr78.

Belongs to the fluoride channel Fluc/FEX (TC 1.A.43) family.

The protein localises to the cell inner membrane. The catalysed reaction is fluoride(in) = fluoride(out). Its activity is regulated as follows. Na(+) is not transported, but it plays an essential structural role and its presence is essential for fluoride channel function. In terms of biological role, fluoride-specific ion channel. Important for reducing fluoride concentration in the cell, thus reducing its toxicity. The polypeptide is Fluoride-specific ion channel FluC (Campylobacter jejuni subsp. jejuni serotype O:2 (strain ATCC 700819 / NCTC 11168)).